Reading from the N-terminus, the 461-residue chain is UDP-N-acetylmuramate--L-alanine ligase (461 aa).

Residue 112–118 (GTHGKTT) participates in ATP binding.

Belongs to the MurCDEF family.

The protein resides in the cytoplasm. It carries out the reaction UDP-N-acetyl-alpha-D-muramate + L-alanine + ATP = UDP-N-acetyl-alpha-D-muramoyl-L-alanine + ADP + phosphate + H(+). Its pathway is cell wall biogenesis; peptidoglycan biosynthesis. Functionally, cell wall formation. In Hydrogenovibrio crunogenus (strain DSM 25203 / XCL-2) (Thiomicrospira crunogena), this protein is UDP-N-acetylmuramate--L-alanine ligase.